The primary structure comprises 725 residues: Ribonuclease Y (725 aa).

Residues 4 to 24 (VLVILLSLVLLVLVALILAVA) form a helical membrane-spanning segment. 3 disordered regions span residues 62 to 140 (DGPA…ASDT), 165 to 195 (VAATEDTSLEAPLRESALRESAPGESASVRR), and 300 to 321 (EQRVEERTAGLDEHASRLAGRE). 2 stretches are compositionally biased toward low complexity: residues 84-100 (DAPGAAYGESAAAPDAG) and 114-137 (AAAPEPGAAIGGAPTPAAGSPADA). The KH domain maps to 415 to 481 (VVTVLHLPGD…RITLAALVSD (67 aa)). One can recognise an HD domain in the interval 541–634 (VLAHLIESAH…TQAADQISGG (94 aa)).

It belongs to the RNase Y family.

It localises to the cell membrane. Endoribonuclease that initiates mRNA decay. The chain is Ribonuclease Y from Frankia alni (strain DSM 45986 / CECT 9034 / ACN14a).